The chain runs to 268 residues: 4-hydroxy-tetrahydrodipicolinate reductase (268 aa).

NAD(+)-binding positions include 9–14 (GAAGRM), 99–101 (GTT), and 123–126 (ASNF). His-156 serves as the catalytic Proton donor/acceptor. His-157 lines the (S)-2,3,4,5-tetrahydrodipicolinate pocket. Lys-160 acts as the Proton donor in catalysis. Position 166 to 167 (166 to 167 (GT)) interacts with (S)-2,3,4,5-tetrahydrodipicolinate.

It belongs to the DapB family.

Its subcellular location is the cytoplasm. It catalyses the reaction (S)-2,3,4,5-tetrahydrodipicolinate + NAD(+) + H2O = (2S,4S)-4-hydroxy-2,3,4,5-tetrahydrodipicolinate + NADH + H(+). The catalysed reaction is (S)-2,3,4,5-tetrahydrodipicolinate + NADP(+) + H2O = (2S,4S)-4-hydroxy-2,3,4,5-tetrahydrodipicolinate + NADPH + H(+). It functions in the pathway amino-acid biosynthesis; L-lysine biosynthesis via DAP pathway; (S)-tetrahydrodipicolinate from L-aspartate: step 4/4. Catalyzes the conversion of 4-hydroxy-tetrahydrodipicolinate (HTPA) to tetrahydrodipicolinate. This chain is 4-hydroxy-tetrahydrodipicolinate reductase, found in Saccharophagus degradans (strain 2-40 / ATCC 43961 / DSM 17024).